Reading from the N-terminus, the 396-residue chain is Probable tRNA sulfurtransferase (396 aa).

Residues 58 to 169 (NQFIEKLKMV…KKNIYVFTRS (112 aa)) form the THUMP domain. Residues 187–188 (LL), 212–213 (YF), Arg269, Gly291, and Gln300 each bind ATP.

Belongs to the ThiI family.

It localises to the cytoplasm. It catalyses the reaction [ThiI sulfur-carrier protein]-S-sulfanyl-L-cysteine + a uridine in tRNA + 2 reduced [2Fe-2S]-[ferredoxin] + ATP + H(+) = [ThiI sulfur-carrier protein]-L-cysteine + a 4-thiouridine in tRNA + 2 oxidized [2Fe-2S]-[ferredoxin] + AMP + diphosphate. The enzyme catalyses [ThiS sulfur-carrier protein]-C-terminal Gly-Gly-AMP + S-sulfanyl-L-cysteinyl-[cysteine desulfurase] + AH2 = [ThiS sulfur-carrier protein]-C-terminal-Gly-aminoethanethioate + L-cysteinyl-[cysteine desulfurase] + A + AMP + 2 H(+). The protein operates within cofactor biosynthesis; thiamine diphosphate biosynthesis. In terms of biological role, catalyzes the ATP-dependent transfer of a sulfur to tRNA to produce 4-thiouridine in position 8 of tRNAs, which functions as a near-UV photosensor. Also catalyzes the transfer of sulfur to the sulfur carrier protein ThiS, forming ThiS-thiocarboxylate. This is a step in the synthesis of thiazole, in the thiamine biosynthesis pathway. The sulfur is donated as persulfide by IscS. The protein is Probable tRNA sulfurtransferase of Halothermothrix orenii (strain H 168 / OCM 544 / DSM 9562).